Reading from the N-terminus, the 243-residue chain is Sarcospan (243 aa).

The disordered stretch occupies residues 1–43 (MGKNKQPRGQQRQGGPPAADAAGPDDMEPKKGTGAPKECGEEE). The Cytoplasmic segment spans residues 1 to 53 (MGKNKQPRGQQRQGGPPAADAAGPDDMEPKKGTGAPKECGEEEPRTCCGCRFP). The span at 7-24 (PRGQQRQGGPPAADAAGP) shows a compositional bias: low complexity. Residues 54-74 (LLLALLQLALGIAVTVVGFLM) traverse the membrane as a helical segment. The Extracellular segment spans residues 75–86 (ASISSSLLVRDT). Residues 87–107 (PFWAGIIVCLVAYLGLFMLCV) traverse the membrane as a helical segment. Residues 108-122 (SYQVDERTCIQFSMK) are Cytoplasmic-facing. A helical transmembrane segment spans residues 123–143 (LLYFLLSALGLTVCVLAVAFA). Residues 144-193 (AHHYSQLTQFTCETTLDSCQCKLPSSEPLSRTFVYRDVTDCTSVTGTFKL) are Extracellular-facing. The helical transmembrane segment at 194–214 (FLLIQMILNLVCGLVCLLACF) threads the bilayer. Over 215–243 (VMWKHRYQVFYVGVRICSLTASEGPQQKI) the chain is Cytoplasmic.

As to expression, isoform 1 is expressed exclusively in heart and skeletal muscle. Isoform 2 is expressed in heart, skeletal muscle, thymus, prostate, testis, ovary, small intestine, colon and spleen.

The protein localises to the cell membrane. It is found in the sarcolemma. The protein resides in the postsynaptic cell membrane. Functionally, component of the dystrophin-glycoprotein complex (DGC), a complex that spans the muscle plasma membrane and forms a link between the F-actin cytoskeleton and the extracellular matrix. Preferentially associates with the sarcoglycan subcomplex of the DGC. The chain is Sarcospan (SSPN) from Homo sapiens (Human).